Reading from the N-terminus, the 462-residue chain is Adenosylhomocysteinase (462 aa).

Substrate-binding residues include Thr-55, Asp-128, and Glu-188. 189 to 191 (TTT) provides a ligand contact to NAD(+). Substrate contacts are provided by Lys-218 and Asp-222. Residues Asn-223, 252 to 257 (GYGDVG), Glu-275, Asn-310, 331 to 333 (IGH), and Asn-376 each bind NAD(+).

The protein belongs to the adenosylhomocysteinase family. The cofactor is NAD(+).

It localises to the cytoplasm. The enzyme catalyses S-adenosyl-L-homocysteine + H2O = L-homocysteine + adenosine. Its pathway is amino-acid biosynthesis; L-homocysteine biosynthesis; L-homocysteine from S-adenosyl-L-homocysteine: step 1/1. May play a key role in the regulation of the intracellular concentration of adenosylhomocysteine. The polypeptide is Adenosylhomocysteinase (Roseobacter denitrificans (strain ATCC 33942 / OCh 114) (Erythrobacter sp. (strain OCh 114))).